Consider the following 315-residue polypeptide: MNPNFLDFEQPIADLQAKIEELRLVGNDNSLNISDEIARLQDKSSTLTESIFGNLTSWQIARLARHPRRPYTLDYIEHIFTEFEELHGDRHFSDDAAIVGGTARLNDKPVMVIGHQKGREVREKVRRNFGMPRPEGYRKACRLMEMAERFKMPILTFIDTPGAYPGIDAEERNQSEAIAWNLRVMARLKTPIIATVIGEGGSGGALAIGVCDQLNMLQYSTYSVISPEGCASILWKTADKAADAAEAMGITAERLKSLNIVDKVIQEPLGGAHRDPAKMAANVRADLIEQLDMLGKLDNDTLLKRRYDRLMSYGI.

Residues 39 to 293 (RLQDKSSTLT…RADLIEQLDM (255 aa)) enclose the CoA carboxyltransferase C-terminal domain.

This sequence belongs to the AccA family. As to quaternary structure, acetyl-CoA carboxylase is a heterohexamer composed of biotin carboxyl carrier protein (AccB), biotin carboxylase (AccC) and two subunits each of ACCase subunit alpha (AccA) and ACCase subunit beta (AccD).

It is found in the cytoplasm. The enzyme catalyses N(6)-carboxybiotinyl-L-lysyl-[protein] + acetyl-CoA = N(6)-biotinyl-L-lysyl-[protein] + malonyl-CoA. The protein operates within lipid metabolism; malonyl-CoA biosynthesis; malonyl-CoA from acetyl-CoA: step 1/1. In terms of biological role, component of the acetyl coenzyme A carboxylase (ACC) complex. First, biotin carboxylase catalyzes the carboxylation of biotin on its carrier protein (BCCP) and then the CO(2) group is transferred by the carboxyltransferase to acetyl-CoA to form malonyl-CoA. This chain is Acetyl-coenzyme A carboxylase carboxyl transferase subunit alpha, found in Pseudomonas entomophila (strain L48).